Consider the following 344-residue polypeptide: GTPase Obg (344 aa).

The Obg domain maps to 1 to 159 (MKFLDLAKVY…RTIWLRLKLI (159 aa)). One can recognise an OBG-type G domain in the interval 160-327 (ADVGLLGLPN…VLRALRARID (168 aa)). Residues 166-173 (GLPNAGKS), 191-195 (FTTLH), 212-215 (DIPG), 279-282 (NKID), and 308-310 (SGA) contribute to the GTP site. The Mg(2+) site is built by serine 173 and threonine 193.

This sequence belongs to the TRAFAC class OBG-HflX-like GTPase superfamily. OBG GTPase family. As to quaternary structure, monomer. It depends on Mg(2+) as a cofactor.

The protein resides in the cytoplasm. An essential GTPase which binds GTP, GDP and possibly (p)ppGpp with moderate affinity, with high nucleotide exchange rates and a fairly low GTP hydrolysis rate. Plays a role in control of the cell cycle, stress response, ribosome biogenesis and in those bacteria that undergo differentiation, in morphogenesis control. This Ruegeria pomeroyi (strain ATCC 700808 / DSM 15171 / DSS-3) (Silicibacter pomeroyi) protein is GTPase Obg.